Here is a 147-residue protein sequence, read N- to C-terminus: Hemoglobin subunit beta (147 aa).

N-acetylvaline is present on V2. In terms of domain architecture, Globin spans 3 to 147 (HLTGEEKAAV…VANALAHKYH (145 aa)). A Phosphothreonine modification is found at T13. At S45 the chain carries Phosphoserine. Position 60 is an N6-acetyllysine (K60). H64 contacts heme b. K83 carries the N6-acetyllysine modification. Residue H93 participates in heme b binding. C94 carries the S-nitrosocysteine modification. Residue K145 is modified to N6-acetyllysine.

This sequence belongs to the globin family. Heterotetramer of two alpha chains and two beta chains. As to expression, red blood cells.

Its function is as follows. Involved in oxygen transport from the lung to the various peripheral tissues. The polypeptide is Hemoglobin subunit beta (HBB) (Lagothrix lagotricha (Brown woolly monkey)).